A 736-amino-acid polypeptide reads, in one-letter code: Peroxisomal multifunctional enzyme type 2 (736 aa).

The tract at residues 1–305 (MGSPLRFDGR…IEVLSKIDSE (305 aa)) is (3R)-hydroxyacyl-CoA dehydrogenase. Residues 13–37 (LVTG…ALVV), leucine 21, and aspartate 40 each bind NAD(+). Lysine 46 bears the N6-acetyllysine; alternate mark. Lysine 46 carries the post-translational modification N6-succinyllysine; alternate. The residue at position 52 (serine 52) is a Phosphoserine. N6-succinyllysine is present on residues lysine 57 and lysine 68. An NAD(+)-binding site is contributed by 75–76 (SV). Lysine 84 is modified (N6-succinyllysine). Residue asparagine 99 participates in NAD(+) binding. Residue serine 151 participates in substrate binding. Catalysis depends on tyrosine 164, which acts as the Proton acceptor. Residues 164–168 (YSAAK) and 196–199 (AGSR) contribute to the NAD(+) site. Residue threonine 265 is modified to Phosphothreonine. Lysine 275 bears the N6-succinyllysine mark. Residues serine 304 and serine 309 each carry the phosphoserine modification. The tract at residues 322–622 (SGFAGAIGQK…AKTPSEGGKL (301 aa)) is enoyl-CoA hydratase 2. An N6-succinyllysine modification is found at lysine 356. 406–407 (HG) lines the (3R)-3-hydroxydecanoyl-CoA pocket. An N6-succinyllysine modification is found at lysine 424. Residues lysine 435, 510-515 (DWNPLH), glycine 533, and phenylalanine 563 each bind (3R)-3-hydroxydecanoyl-CoA. One can recognise a MaoC-like domain in the interval 484–600 (IPNRPPDAVL…QETGDIVISN (117 aa)). The residue at position 565 (lysine 565) is an N6-acetyllysine. Residues lysine 579 and lysine 663 each carry the N6-succinyllysine modification. One can recognise an SCP2 domain in the interval 624 to 736 (STFVFEEIGR…QMILKDYAKL (113 aa)). An N6-acetyllysine modification is found at lysine 669. Glutamine 706 is a substrate binding site. The residue at position 707 (lysine 707) is an N6-acetyllysine. Glutamine 724 contacts substrate. Residue lysine 725 is modified to N6-succinyllysine. Residues 734–736 (AKL) carry the Microbody targeting signal motif.

This sequence belongs to the short-chain dehydrogenases/reductases (SDR) family. Homodimer. In terms of tissue distribution, present in many tissues with highest concentrations in liver, heart, prostate and testis.

It localises to the peroxisome. The enzyme catalyses a (3R)-3-hydroxyacyl-CoA + NAD(+) = a 3-oxoacyl-CoA + NADH + H(+). It catalyses the reaction a (3R)-3-hydroxyacyl-CoA = a (2E)-enoyl-CoA + H2O. It carries out the reaction (24R,25R)-3alpha,7alpha,12alpha,24-tetrahydroxy-5beta-cholestan-26-oyl-CoA = (24E)-3alpha,7alpha,12alpha-trihydroxy-5beta-cholest-24-en-26-oyl-CoA + H2O. The catalysed reaction is (2E)-octenoyl-CoA + H2O = (3R)-hydroxyoctanoyl-CoA. The enzyme catalyses (3R)-hydroxyoctanoyl-CoA + NAD(+) = 3-oxooctanoyl-CoA + NADH + H(+). It catalyses the reaction (3R)-hydroxyhexadecanoyl-CoA + NAD(+) = 3-oxohexadecanoyl-CoA + NADH + H(+). It carries out the reaction (2E)-hexadecenedioyl-CoA + H2O = (3R)-hydroxyhexadecanedioyl-CoA. The catalysed reaction is (3R)-hydroxyhexadecanedioyl-CoA + NAD(+) = 3-oxohexadecanedioyl-CoA + NADH + H(+). The enzyme catalyses (3R)-hydroxyhexadecanoyl-CoA = (2E)-hexadecenoyl-CoA + H2O. It catalyses the reaction (3R)-3-hydroxydecanoyl-CoA = (2E)-decenoyl-CoA + H2O. It carries out the reaction (3R)-3-hydroxydecanoyl-CoA + NAD(+) = 3-oxodecanoyl-CoA + NADH + H(+). The catalysed reaction is (24R,25R)-3alpha,7alpha,12alpha,24-tetrahydroxy-5beta-cholestan-26-oyl-CoA + NAD(+) = 3alpha,7alpha,12alpha-trihydroxy-24-oxo-5beta-cholestan-26-oyl-CoA + NADH + H(+). It functions in the pathway lipid metabolism; fatty acid beta-oxidation. Functionally, bifunctional enzyme acting on the peroxisomal fatty acid beta-oxidation pathway. Catalyzes two of the four reactions in fatty acid degradation: hydration of 2-enoyl-CoA (trans-2-enoyl-CoA) to produce (3R)-3-hydroxyacyl-CoA, and dehydrogenation of (3R)-3-hydroxyacyl-CoA to produce 3-ketoacyl-CoA (3-oxoacyl-CoA), which is further metabolized by SCPx. Can use straight-chain and branched-chain fatty acids, as well as bile acid intermediates as substrates. The sequence is that of Peroxisomal multifunctional enzyme type 2 from Homo sapiens (Human).